The sequence spans 90 residues: Small ribosomal subunit protein bS16 (90 aa).

It belongs to the bacterial ribosomal protein bS16 family.

In Lactiplantibacillus plantarum (strain ATCC BAA-793 / NCIMB 8826 / WCFS1) (Lactobacillus plantarum), this protein is Small ribosomal subunit protein bS16.